We begin with the raw amino-acid sequence, 181 residues long: Inner membrane-spanning protein YciB (181 aa).

Helical transmembrane passes span 8-28 (FPII…ATAA), 53-73 (ITLI…NAIF), 76-96 (WKPT…HFFG), 121-141 (LSWA…VYNF), and 149-169 (FKLF…AFYI).

Belongs to the YciB family.

Its subcellular location is the cell inner membrane. In terms of biological role, plays a role in cell envelope biogenesis, maintenance of cell envelope integrity and membrane homeostasis. The sequence is that of Inner membrane-spanning protein YciB from Coxiella burnetii (strain CbuK_Q154) (Coxiella burnetii (strain Q154)).